The following is a 147-amino-acid chain: Large ribosomal subunit protein uL15 (147 aa).

The disordered stretch occupies residues 1-58 (MKLFELKPAPGAKKRPKRVGRGESSGHGKTSTRGHKGQWARSGGGVRPGFEGGQMPLT). The span at 42 to 52 (SGGGVRPGFEG) shows a compositional bias: gly residues.

It belongs to the universal ribosomal protein uL15 family. In terms of assembly, part of the 50S ribosomal subunit.

Functionally, binds to the 23S rRNA. The polypeptide is Large ribosomal subunit protein uL15 (Caldicellulosiruptor saccharolyticus (strain ATCC 43494 / DSM 8903 / Tp8T 6331)).